Here is a 307-residue protein sequence, read N- to C-terminus: Methionyl-tRNA formyltransferase (307 aa).

109–112 (SMLP) lines the (6S)-5,6,7,8-tetrahydrofolate pocket.

It belongs to the Fmt family.

It carries out the reaction L-methionyl-tRNA(fMet) + (6R)-10-formyltetrahydrofolate = N-formyl-L-methionyl-tRNA(fMet) + (6S)-5,6,7,8-tetrahydrofolate + H(+). Its function is as follows. Attaches a formyl group to the free amino group of methionyl-tRNA(fMet). The formyl group appears to play a dual role in the initiator identity of N-formylmethionyl-tRNA by promoting its recognition by IF2 and preventing the misappropriation of this tRNA by the elongation apparatus. The chain is Methionyl-tRNA formyltransferase from Orientia tsutsugamushi (strain Boryong) (Rickettsia tsutsugamushi).